A 262-amino-acid chain; its full sequence is Phosphatidylglycerol--prolipoprotein diacylglyceryl transferase (262 aa).

A run of 4 helical transmembrane segments spans residues 9 to 29 (LGPLAIRWYALCIVTGLILAV), 41 to 61 (IIPDDILDFILVAFPLAILGA), 80 to 100 (IFAIWNGGLAIYGGLITGALV), and 109 to 129 (LINTWDFLDIAAPSVMIAQSL). Arg-131 contributes to the a 1,2-diacyl-sn-glycero-3-phospho-(1'-sn-glycerol) binding site. Transmembrane regions (helical) follow at residues 167 to 187 (QPTFLYESLWNLLGFALILIF), 197 to 217 (GHITAFYLIWYGFGRMVIEGM), and 226 to 246 (GLRVSQWLSVVFIGLGIMIVI).

The protein belongs to the Lgt family.

It localises to the cell membrane. The catalysed reaction is L-cysteinyl-[prolipoprotein] + a 1,2-diacyl-sn-glycero-3-phospho-(1'-sn-glycerol) = an S-1,2-diacyl-sn-glyceryl-L-cysteinyl-[prolipoprotein] + sn-glycerol 1-phosphate + H(+). It participates in protein modification; lipoprotein biosynthesis (diacylglyceryl transfer). In terms of biological role, catalyzes the transfer of the diacylglyceryl group from phosphatidylglycerol to the sulfhydryl group of the N-terminal cysteine of a prolipoprotein, the first step in the formation of mature lipoproteins. The polypeptide is Phosphatidylglycerol--prolipoprotein diacylglyceryl transferase (Streptococcus pneumoniae (strain Taiwan19F-14)).